A 160-amino-acid polypeptide reads, in one-letter code: Early E3 18.5 kDa glycoprotein (160 aa).

A signal peptide spans 1–17 (MIRYIILGLLTLASAHG). Residues 18–124 (TTQKVDFKEP…PPQNCVENTG (107 aa)) are Lumenal-facing. 2 disulfides stabilise this stretch: Cys29-Cys46 and Cys40-Cys101. N-linked (GlcNAc...) asparagine; by host glycans are attached at residues Asn30 and Asn79. A helical membrane pass occupies residues 125 to 145 (TFCCTAMLITVLALVCTLLYI). The Cytoplasmic portion of the chain corresponds to 146-160 (KYKSRRSFIEEKKMP). The short motif at 157-160 (KKMP) is the Di-lysine motif element.

It belongs to the adenoviridae E19 family. Post-translationally, both disulfide bonds are absolutely critical for the interaction with MHC antigens. N-glycosylated; high-mannose.

The protein resides in the host endoplasmic reticulum membrane. Its function is as follows. Binds and retains class I heavy chains in the endoplasmic reticulum during the early period of virus infection, thereby impairing their transport to the cell surface. Also delays the expression of class I alleles that it cannot affect by direct retention. Binds transporters associated with antigen processing (TAP) and acts as a tapasin inhibitor, preventing class I/TAP association. In consequence, infected cells are masked for immune recognition by cytotoxic T-lymphocytes. The polypeptide is Early E3 18.5 kDa glycoprotein (Homo sapiens (Human)).